A 197-amino-acid chain; its full sequence is 3-isopropylmalate dehydratase small subunit (197 aa).

It belongs to the LeuD family. LeuD type 1 subfamily. In terms of assembly, heterodimer of LeuC and LeuD.

It catalyses the reaction (2R,3S)-3-isopropylmalate = (2S)-2-isopropylmalate. Its pathway is amino-acid biosynthesis; L-leucine biosynthesis; L-leucine from 3-methyl-2-oxobutanoate: step 2/4. Its function is as follows. Catalyzes the isomerization between 2-isopropylmalate and 3-isopropylmalate, via the formation of 2-isopropylmaleate. The protein is 3-isopropylmalate dehydratase small subunit of Streptomyces griseus subsp. griseus (strain JCM 4626 / CBS 651.72 / NBRC 13350 / KCC S-0626 / ISP 5235).